Reading from the N-terminus, the 718-residue chain is Myeloperoxidase (718 aa).

The N-terminal stretch at 1 to 15 (MKLLLALAGLLAPLA) is a signal peptide. Residues 16–138 (MLQTSNGATP…SSGCAYQDVR (123 aa)) constitute a propeptide that is removed on maturation. Residue Asn-113 is glycosylated (N-linked (GlcNAc...) asparagine). A disulfide bridge connects residues Cys-141 and Cys-154. Asp-234 is a binding site for heme b. The Proton acceptor role is filled by His-235. Asp-236 lines the Ca(2+) pocket. Cystine bridges form between Cys-255-Cys-265 and Cys-259-Cys-283. Residue Cys-290 is modified to Cysteine sulfenic acid (-SOH). A glycan (N-linked (GlcNAc...) asparagine) is linked at Asn-297. Positions 308, 310, 312, and 314 each coordinate Ca(2+). N-linked (GlcNAc...) asparagine glycosylation is found at Asn-329 and Asn-365. Residues Cys-361 and Cys-372 are joined by a disulfide bond. Residues Glu-382 and Met-383 each contribute to the heme b site. N-linked (GlcNAc...) asparagine glycosylation is present at Asn-457. His-476 contacts heme b. 2 disulfide bridges follow: Cys-580–Cys-637 and Cys-678–Cys-704. N-linked (GlcNAc...) asparagine glycosylation is present at Asn-711.

The protein belongs to the peroxidase family. XPO subfamily. In terms of assembly, homodimer; disulfide-linked. Each monomer consists of a light and a heavy chain. Found in a complex with CP and LTF; interacts directly with CP, which protects CP antioxidant properties by MPO. It depends on Ca(2+) as a cofactor. Requires heme b as cofactor.

The protein localises to the lysosome. The catalysed reaction is chloride + H2O2 + H(+) = hypochlorous acid + H2O. Its function is as follows. Part of the host defense system of polymorphonuclear leukocytes. It is responsible for microbicidal activity against a wide range of organisms. In the stimulated PMN, MPO catalyzes the production of hypohalous acids, primarily hypochlorous acid in physiologic situations, and other toxic intermediates that greatly enhance PMN microbicidal activity. Mediates the proteolytic cleavage of alpha-1-microglobulin to form t-alpha-1-microglobulin, which potently inhibits oxidation of low density lipoprotein particles and limits vascular damage. The polypeptide is Myeloperoxidase (Mpo) (Mus musculus (Mouse)).